Consider the following 683-residue polypeptide: Multidrug resistance protein MdtO (683 aa).

9 helical membrane-spanning segments follow: residues 43 to 63 (VILI…AVLF), 75 to 95 (FVAI…FLIY), 100 to 120 (GEPL…MFLM), 125 to 145 (LGLV…FPAM), 158 to 178 (WCIV…VLWF), 402 to 422 (FGGA…VMPW), 426 to 446 (IVEL…IATS), 457 to 477 (MVVT…YDLV), and 483 to 503 (ALGI…VWPE).

It belongs to the MdtO family. In terms of assembly, could be part of a tripartite efflux system composed of MdtN, MdtO and MdtP.

The protein localises to the cell inner membrane. Could be involved in resistance to puromycin, acriflavine and tetraphenylarsonium chloride. The chain is Multidrug resistance protein MdtO (mdtO) from Escherichia coli (strain K12).